Consider the following 308-residue polypeptide: Ribosomal RNA large subunit methyltransferase F (308 aa).

The protein belongs to the methyltransferase superfamily. METTL16/RlmF family.

The protein resides in the cytoplasm. It carries out the reaction adenosine(1618) in 23S rRNA + S-adenosyl-L-methionine = N(6)-methyladenosine(1618) in 23S rRNA + S-adenosyl-L-homocysteine + H(+). Specifically methylates the adenine in position 1618 of 23S rRNA. This is Ribosomal RNA large subunit methyltransferase F from Salmonella paratyphi A (strain ATCC 9150 / SARB42).